A 37-amino-acid chain; its full sequence is Delta-amaurobitoxin-Pl1a (37 aa).

4 disulfides stabilise this stretch: C2–C18, C9–C23, C17–C33, and C25–C31. Position 37 is a serine amide (S37).

The protein belongs to the neurotoxin 07 (Beta/delta-agtx) family. 02 (aga-3) subfamily. Expressed by the venom gland.

It localises to the secreted. In terms of biological role, binds at site 4 of sodium channels (Nav) and inhibits the fast inactivation of cockroach channels. This toxin is active only on insects. Has a potent activity against S.litura larvae. The chain is Delta-amaurobitoxin-Pl1a from Pireneitega luctuosa (Tangled nest spider).